The sequence spans 192 residues: Cytidylate kinase (192 aa).

7-15 (GPPGSGKST) lines the ATP pocket.

Belongs to the cytidylate kinase family. Type 2 subfamily.

Its subcellular location is the cytoplasm. It carries out the reaction CMP + ATP = CDP + ADP. The catalysed reaction is dCMP + ATP = dCDP + ADP. This Halobacterium salinarum (strain ATCC 29341 / DSM 671 / R1) protein is Cytidylate kinase.